Consider the following 254-residue polypeptide: Transcription factor CAULIFLOWER (254 aa).

One can recognise an MADS-box domain in the interval 1–61 (MGRGRVEMKR…GKLFEYSSES (61 aa)). Residues 90–180 (QTNWSMEYSR…TKQIKERESI (91 aa)) enclose the K-box domain. The segment covering 182–191 (RTHQNQSEQQ) has biased composition (polar residues). The tract at residues 182-205 (RTHQNQSEQQNRSHHVAPQPQPQL) is disordered.

Homodimer capable of binding to CArG-box sequences.

Its subcellular location is the nucleus. Probable transcription factor that promotes early floral meristem identity in synergy with APETALA1, FRUITFULL and LEAFY. Is required subsequently for the transition of an inflorescence meristem into a floral meristem. Seems to be partially redundant to the function of APETALA1. This is Transcription factor CAULIFLOWER (CAL) from Brassica rapa subsp. chinensis (Pak-choi).